The following is a 315-amino-acid chain: Acetyl-coenzyme A carboxylase carboxyl transferase subunit beta, chloroplastic (315 aa).

One can recognise a CoA carboxyltransferase N-terminal domain in the interval 47–315 (LWTRCDSCEN…VYKESNSYLF (269 aa)). Residues cysteine 51, cysteine 54, cysteine 70, and cysteine 73 each contribute to the Zn(2+) site. A C4-type zinc finger spans residues 51 to 73 (CDSCENMLYVRFLKQNKRICEEC).

It belongs to the AccD/PCCB family. As to quaternary structure, acetyl-CoA carboxylase is a heterohexamer composed of biotin carboxyl carrier protein, biotin carboxylase and 2 subunits each of ACCase subunit alpha and ACCase plastid-coded subunit beta (accD). It depends on Zn(2+) as a cofactor.

The protein resides in the plastid. Its subcellular location is the chloroplast stroma. It catalyses the reaction N(6)-carboxybiotinyl-L-lysyl-[protein] + acetyl-CoA = N(6)-biotinyl-L-lysyl-[protein] + malonyl-CoA. Its pathway is lipid metabolism; malonyl-CoA biosynthesis; malonyl-CoA from acetyl-CoA: step 1/1. In terms of biological role, component of the acetyl coenzyme A carboxylase (ACC) complex. Biotin carboxylase (BC) catalyzes the carboxylation of biotin on its carrier protein (BCCP) and then the CO(2) group is transferred by the transcarboxylase to acetyl-CoA to form malonyl-CoA. This is Acetyl-coenzyme A carboxylase carboxyl transferase subunit beta, chloroplastic from Physcomitrium patens (Spreading-leaved earth moss).